Reading from the N-terminus, the 335-residue chain is Expansin-like protein 3 (335 aa).

An N-terminal signal peptide occupies residues 1–20 (MKFNTIFLVLSIVKFILISA). Topologically, residues 21-314 (QSCPFSQSII…LNENENIESN (294 aa)) are extracellular. The 101-residue stretch at 43-143 (AGNCGFEKLN…VKVPCEVSGN (101 aa)) folds into the Expansin-like EG45 domain. 2 disulfide bridges follow: Cys46-Cys76 and Cys79-Cys138. Asn87 carries N-linked (GlcNAc...) asparagine glycosylation. Residues 247-276 (YKPQTFNSQQTSNNQNSNTQTPTKQPSPNS) form a disordered region. Over residues 249–272 (PQTFNSQQTSNNQNSNTQTPTKQP) the composition is skewed to low complexity. A helical transmembrane segment spans residues 315-335 (SLKLLPNFLLLILIILLNINF).

This sequence belongs to the expansin family. Expansin A subfamily.

It localises to the membrane. Its function is as follows. May serve to lubricate the movement of the cellulose microfibrils during cell growth and wall extension and/or may serve to maintain the fluid state of the slug cell wall. The polypeptide is Expansin-like protein 3 (expl3) (Dictyostelium discoideum (Social amoeba)).